A 234-amino-acid polypeptide reads, in one-letter code: Flagellar L-ring protein (234 aa).

Positions 1–15 (MRYAVICMLLLAASG) are cleaved as a signal peptide. Cys16 carries the N-palmitoyl cysteine lipid modification. Cys16 is lipidated: S-diacylglycerol cysteine.

The protein belongs to the FlgH family. As to quaternary structure, the basal body constitutes a major portion of the flagellar organelle and consists of four rings (L,P,S, and M) mounted on a central rod.

It is found in the cell outer membrane. The protein localises to the bacterial flagellum basal body. Assembles around the rod to form the L-ring and probably protects the motor/basal body from shearing forces during rotation. The sequence is that of Flagellar L-ring protein from Oleidesulfovibrio alaskensis (strain ATCC BAA-1058 / DSM 17464 / G20) (Desulfovibrio alaskensis).